A 1091-amino-acid polypeptide reads, in one-letter code: Ubiquitin carboxyl-terminal hydrolase 36 (1091 aa).

The interval alanine 115–lysine 152 is disordered. Positions histidine 128–asparagine 146 are enriched in low complexity. Residues serine 176–aspartate 484 form the USP domain. Cysteine 185 (nucleophile) is an active-site residue. The active-site Proton acceptor is histidine 443. Serine 518 and serine 522 each carry phosphoserine. Disordered regions lie at residues proline 523–leucine 572, proline 594–lysine 892, glutamine 972–proline 1007, and leucine 1068–serine 1091. The segment covering threonine 547 to leucine 572 has biased composition (polar residues). The span at proline 594–asparagine 612 shows a compositional bias: low complexity. Basic and acidic residues predominate over residues lysine 643–lysine 652. The span at proline 653–serine 667 shows a compositional bias: low complexity. Threonine 659 and threonine 663 each carry phosphothreonine. Residues serine 673 and serine 675 each carry the phosphoserine modification. A compositionally biased stretch (basic and acidic residues) spans arginine 691–proline 702. Positions threonine 703–threonine 727 are enriched in polar residues. A Phosphoserine modification is found at serine 749. Residues serine 749 to proline 759 show a composition bias toward acidic residues. Residues proline 769 to glycine 780 are compositionally biased toward low complexity. The span at proline 781–proline 790 shows a compositional bias: pro residues. Serine 783 bears the Phosphoserine mark. Threonine 786 carries the post-translational modification Phosphothreonine. Serine 789 carries the post-translational modification Phosphoserine. Positions aspartate 806 to valine 821 are enriched in acidic residues. Residue threonine 829 is modified to Phosphothreonine. 2 stretches are compositionally biased toward polar residues: residues phenylalanine 838–threonine 850 and alanine 863–threonine 886. Residue serine 847 is modified to Phosphoserine. The residue at position 850 (threonine 850) is a Phosphothreonine.

It belongs to the peptidase C19 family. In terms of assembly, interacts with atms/PAF1, but not with CycT.

The protein resides in the nucleus. It is found in the nucleolus. The catalysed reaction is Thiol-dependent hydrolysis of ester, thioester, amide, peptide and isopeptide bonds formed by the C-terminal Gly of ubiquitin (a 76-residue protein attached to proteins as an intracellular targeting signal).. Functionally, required for maintaining multiple types of adult stem cells, including male and female germline, epithelial follicle cell and intestinal stem cells. May function as a transcriptional repressor by continually deubiquiting histone H2B at the promoters of genes critical for cellular differentiation, thereby preventing histone H3 'Lys-4' trimethylation (H3K4). Controls selective autophagy activation by ubiquitinated proteins. In Drosophila ananassae (Fruit fly), this protein is Ubiquitin carboxyl-terminal hydrolase 36 (Usp36).